The chain runs to 651 residues: Probable potassium transport system protein Kup (651 aa).

12 helical membrane-spanning segments follow: residues 41 to 61, 82 to 102, 130 to 150, 163 to 183, 194 to 214, 235 to 255, 276 to 296, 309 to 329, 366 to 386, 395 to 415, 426 to 446, and 450 to 470; these read LVLG…IYAF, VVSL…VLFV, LILG…VITP, IVAP…LVTL, VAIV…ASGL, FLTV…LAMT, WLWI…AFIL, MIPS…TVIA, IYIP…VLGF, AYGI…YIVM, ALPI…ANII, and EGGW…WTWV.

Belongs to the HAK/KUP transporter (TC 2.A.72) family.

The protein resides in the cell inner membrane. The catalysed reaction is K(+)(in) + H(+)(in) = K(+)(out) + H(+)(out). Its function is as follows. Transport of potassium into the cell. Likely operates as a K(+):H(+) symporter. The sequence is that of Probable potassium transport system protein Kup from Brucella melitensis biotype 1 (strain ATCC 23456 / CCUG 17765 / NCTC 10094 / 16M).